A 224-amino-acid chain; its full sequence is MSRERERFEEIGKKIKREADAWPHQMAGIRRPMSGPPGTLNTITPCAACKLLRRRCAQECPFSPYFSPHEPHKFASVHKVFGASNVSKMLMEVPESQRADAANSLVYEANVRLRDPVYGCMGAISALQQQVQALQAELTAVRSEILKYKQREAVATLIVPSNSQVAGFHNSGGVSVIAPPPQRPTTPPQPTTAHPPSPSSCVFSQPTTRDLEYGNIESENNYFG.

One can recognise an LOB domain in the interval Thr44 to Ile145. The interval Ser171 to Gly224 is disordered. Residues Ala178 to Pro198 show a composition bias toward pro residues.

This sequence belongs to the LOB domain-containing protein family. Expressed in young shoots, roots, stems, leaves and flowers.

This chain is LOB domain-containing protein 15 (LBD15), found in Arabidopsis thaliana (Mouse-ear cress).